The following is a 251-amino-acid chain: Hydroxyacylglutathione hydrolase (251 aa).

Residues His53, His55, Asp57, His58, His110, Asp127, and His165 each coordinate Zn(2+).

It belongs to the metallo-beta-lactamase superfamily. Glyoxalase II family. As to quaternary structure, monomer. The cofactor is Zn(2+).

It catalyses the reaction an S-(2-hydroxyacyl)glutathione + H2O = a 2-hydroxy carboxylate + glutathione + H(+). It functions in the pathway secondary metabolite metabolism; methylglyoxal degradation; (R)-lactate from methylglyoxal: step 2/2. In terms of biological role, thiolesterase that catalyzes the hydrolysis of S-D-lactoyl-glutathione to form glutathione and D-lactic acid. This is Hydroxyacylglutathione hydrolase from Salmonella paratyphi C (strain RKS4594).